An 899-amino-acid polypeptide reads, in one-letter code: Probable dipeptidyl-aminopeptidase B (899 aa).

2 disordered regions span residues 1-37 (MARK…SDGS) and 51-84 (KITR…TENS). The Cytoplasmic segment spans residues 1-91 (MARKDKDNGP…ENSKRNRGSR (91 aa)). Low complexity predominate over residues 22-37 (SSASFSSTDSLSSDGS). Over residues 61 to 74 (NPYRDDDVELERGD) the composition is skewed to basic and acidic residues. A helical; Signal-anchor for type II membrane protein transmembrane segment spans residues 92–112 (LIWVVGLLCLGGWILAFVLFW). The Vacuolar segment spans residues 113–899 (GRRNSELSSS…QQGNSVLPVT (787 aa)). N-linked (GlcNAc...) asparagine glycosylation is found at asparagine 149, asparagine 194, asparagine 347, asparagine 409, asparagine 513, asparagine 638, and asparagine 643. The active-site Charge relay system is the serine 752. Residue asparagine 811 is glycosylated (N-linked (GlcNAc...) asparagine). Catalysis depends on charge relay system residues aspartate 829 and histidine 862.

The protein belongs to the peptidase S9B family.

The protein resides in the vacuole membrane. It catalyses the reaction Release of an N-terminal dipeptide, Xaa-Yaa-|-Zaa-, from a polypeptide, preferentially when Yaa is Pro, provided Zaa is neither Pro nor hydroxyproline.. Type IV dipeptidyl-peptidase which removes N-terminal dipeptides sequentially from polypeptides having unsubstituted N-termini provided that the penultimate residue is proline. This is Probable dipeptidyl-aminopeptidase B (dapB) from Talaromyces marneffei (strain ATCC 18224 / CBS 334.59 / QM 7333) (Penicillium marneffei).